Here is a 173-residue protein sequence, read N- to C-terminus: Transcriptional repressor NrdR (173 aa).

Residues 3 to 34 fold into a zinc finger; the sequence is CPFCQHADTRVIDSRVSEDGATIRRRRECEAC. In terms of domain architecture, ATP-cone spans 49–139; sequence PAIVKSDGTR…VYRSFEDVAD (91 aa).

Belongs to the NrdR family. The cofactor is Zn(2+).

Negatively regulates transcription of bacterial ribonucleotide reductase nrd genes and operons by binding to NrdR-boxes. The chain is Transcriptional repressor NrdR from Stenotrophomonas maltophilia (strain R551-3).